Here is a 132-residue protein sequence, read N- to C-terminus: MAKDILGEAGLHFDELNKLRVLDPEVTQQTIELKEECKDFVDKIGQFQKIVGGLIELVDQLAKEAENEKMKAIGARNLLKSIAKQREAQQQQLQALIAEKKMQLERYRVEYEALCKVEAEQNEFIDQFIFQK.

Residues 70-132 (MKAIGARNLL…EFIDQFIFQK (63 aa)) are IFT57-binding. A coiled-coil region spans residues 74–114 (GARNLLKSIAKQREAQQQQLQALIAEKKMQLERYRVEYEAL).

As to quaternary structure, component of the IFT complex B, at least composed of IFT20, IFT22, IFT25, IFT27, IFT46, IFT52, TRAF3IP1/IFT54, IFT57, IFT74, IFT80, IFT81, and IFT88. Interacts directly with IFT57 and KIF3B/Kinesin II subunit. Interacts with IFT88. Interacts with CEP83. Interacts with SPEF2 (via C-terminus). Interacts with CBL and CBLB. Interacts with TRIP11. Interacts with TTC21A. Interacts with SPATA1. Interacts with USH1G. Interacts with CCDC146. Interacts with CEP78; regulating IFT20 stability and localization. As to expression, expressed in almost all tissues.

It is found in the golgi apparatus. Its subcellular location is the cis-Golgi network. The protein resides in the cytoplasm. The protein localises to the cytoskeleton. It localises to the microtubule organizing center. It is found in the centrosome. Its subcellular location is the centriole. The protein resides in the cilium basal body. The protein localises to the cell projection. It localises to the cilium. It is found in the cytoplasmic vesicle. Its subcellular location is the secretory vesicle. The protein resides in the acrosome. In terms of biological role, part of intraflagellar transport (IFT) particles involved in ciliary process assembly. May play a role in the trafficking of ciliary membrane proteins from the Golgi complex to the cilium. Regulates the platelet-derived growth factor receptor-alpha (PDGFRA) signaling pathway. Required for protein stability of E3 ubiquitin ligases CBL and CBLB that mediate ubiquitination and internalization of PDGFRA for proper feedback inhibition of PDGFRA signaling. Essential for male fertility. Plays an important role in spermatogenesis, particularly spermiogenesis, when germ cells form flagella. May play a role in the transport of flagellar proteins ODF2 and SPAG16 to build sperm flagella and in the removal of redundant sperm cytoplasm. Also involved in autophagy since it is required for trafficking of ATG16L and the expansion of the autophagic compartment. In Homo sapiens (Human), this protein is Intraflagellar transport protein 20 homolog (IFT20).